We begin with the raw amino-acid sequence, 318 residues long: Ankyrin repeat and SOCS box protein 7 (318 aa).

ANK repeat units follow at residues 13 to 42 (QEEL…SPNG), 46 to 75 (NGWT…DPTV), 80 to 109 (GGFT…RSDI), 116 to 145 (DGWT…EVDP), 149 to 178 (KGTT…NIDI), 180 to 208 (NGFL…DTNL), and 213 to 242 (DGQT…DTNT). The SOCS box domain maps to 265–318 (LDFLQEVTRQPRNLQDLCRIKIRQCIGLQNLKLLDELPIAKVMKDYLKHKFDDI).

Belongs to the ankyrin SOCS box (ASB) family. Interacts with CUL5. Interacts with RNF7. Interacts with PSRC1.

It functions in the pathway protein modification; protein ubiquitination. Its function is as follows. Probable substrate-recognition component of a SCF-like ECS (Elongin-Cullin-SOCS-box protein) E3 ubiquitin-protein ligase complex which mediates the ubiquitination and subsequent proteasomal degradation of target proteins. Plays a role in spindle dynamics and genome integrity by targeting the mitotic progression protein PSRC1 for proteasomal degradation in a cell cycle-dependent manner. Also participates in meiosis by mediating the proper attachment between kinetochores and microtubules. The protein is Ankyrin repeat and SOCS box protein 7 (ASB7) of Homo sapiens (Human).